The chain runs to 256 residues: MAWSASQYAKFEDERTRPARDLLAQVPLQHLRRAIDLGCGPGNSTELIIERYGADGVSGLDSDANMLEAARKRLPGTAFVEADLGSWQPTEPADLLFANAVFQWLPDHLDIFERLMDGLSEGGVLAVQMPDNLGEPSHLAMEETAHGGPWKAAFEEKGVRRQPLAPPSSYYSRLIAKAARVDIWHTIYNHPMADAAAIVEWVKGTGLMPYLARAGEKHREAFLADYLERIEKTYPKMSDGRVLLRFPRIFIVAVKG.

It belongs to the methyltransferase superfamily. Tam family.

It localises to the cytoplasm. It catalyses the reaction trans-aconitate + S-adenosyl-L-methionine = (E)-3-(methoxycarbonyl)pent-2-enedioate + S-adenosyl-L-homocysteine. Functionally, catalyzes the S-adenosylmethionine monomethyl esterification of trans-aconitate. This Rhizobium etli (strain ATCC 51251 / DSM 11541 / JCM 21823 / NBRC 15573 / CFN 42) protein is Trans-aconitate 2-methyltransferase.